Consider the following 585-residue polypeptide: Frizzled-5 (585 aa).

The first 26 residues, 1–26, serve as a signal peptide directing secretion; it reads MARPDPSAPPSLLLLLLAQLVGRAAA. Residues 27–238 are Extracellular-facing; that stretch reads ASKAPVCQEI…ADERTFATFW (212 aa). Residues 28–150 form the FZ domain; the sequence is SKAPVCQEIT…RDAEVLCMDY (123 aa). Disulfide bonds link Cys33–Cys94, Cys41–Cys87, Cys78–Cys116, Cys105–Cys147, and Cys109–Cys133. An N-linked (GlcNAc...) asparagine glycan is attached at Asn47. Asn151 carries an N-linked (GlcNAc...) asparagine glycan. A disordered region spans residues 156–179; that stretch reads TTAPPRPFPAKPTLPGPPGAPASG. Over residues 159–175 the composition is skewed to pro residues; it reads PPRPFPAKPTLPGPPGA. The chain crosses the membrane as a helical span at residues 239–259; it reads IGLWSVLCFISTSTTVATFLI. The Cytoplasmic segment spans residues 260–270; it reads DMERFRYPERP. A helical membrane pass occupies residues 271–291; that stretch reads IIFLSACYLCVSLGFLVRLVV. Topologically, residues 292 to 315 are extracellular; that stretch reads GHASVACSREHNHIHYETTGPALC. Residues 316–336 form a helical membrane-spanning segment; that stretch reads TIVFLLVYFFGMASSIWWVIL. Residues 337-358 lie on the Cytoplasmic side of the membrane; the sequence is SLTWFLAAGMKWGNEAIAGYAQ. Residues 359-379 traverse the membrane as a helical segment; it reads YFHLAAWLIPSVKSITALALS. The Extracellular portion of the chain corresponds to 380-402; it reads SVDGDPVAGICYVGNQNLNSLRG. Residues 403-423 traverse the membrane as a helical segment; sequence FVLGPLVLYLLVGTLFLLAGF. Residues 424 to 449 are Cytoplasmic-facing; the sequence is VSLFRIRSVIKQGGTKTDKLEKLMIR. The helical transmembrane segment at 450–470 threads the bilayer; that stretch reads IGIFTLLYTVPASIVVACYLY. Topologically, residues 471–500 are extracellular; the sequence is EQHYRESWEAALTCACPGHDTGQPRAKPEY. The helical transmembrane segment at 501-521 threads the bilayer; sequence WVLMLKYFMCLVVGITSGVWI. Residues 522 to 585 lie on the Cytoplasmic side of the membrane; it reads WSGKTVESWR…YHKQVSLSHV (64 aa). The Lys-Thr-X-X-X-Trp motif, mediates interaction with the PDZ domain of Dvl family members motif lies at 525 to 530; that stretch reads KTVESW. The PDZ-binding motif lies at 583–585; it reads SHV.

Belongs to the G-protein coupled receptor Fz/Smo family. Binding of unsaturated fatty acid molecules (via FZ domain) promotes homodimerization. Interacts with WNT2B. Interacts with WNT3A. Interacts with WNT7A. Interacts with GOPC. Post-translationally, ubiquitinated by RNF43 and ZNRF3, leading to its degradation by the proteasome.

Its subcellular location is the cell membrane. The protein localises to the golgi apparatus membrane. The protein resides in the synapse. It localises to the perikaryon. It is found in the cell projection. Its subcellular location is the dendrite. The protein localises to the axon. Functionally, receptor for Wnt proteins. Functions in the canonical Wnt/beta-catenin signaling pathway. In vitro activates WNT2, WNT10B, WNT5A, but not WNT2B or WNT4 signaling. In neurons, activation by WNT7A promotes formation of synapses. May be involved in transduction and intercellular transmission of polarity information during tissue morphogenesis and/or in differentiated tissues. Plays a role in yolk sac angiogenesis and in placental vascularization. Plays a role in ocular development. This chain is Frizzled-5 (FZD5), found in Homo sapiens (Human).